The sequence spans 362 residues: Neisseria adhesin A (362 aa).

The signal sequence occupies residues 1-23 (MKHFPSKVLTTAILATFCSGALA). Residues 24-169 (ATSDDDVKKA…NIVKIDEKLE (146 aa)) are head domain. Coiled-coil stretches lie at residues 90-146 (VTNL…LNKL) and 183-288 (NDIA…KETR). Residues 170-307 (AVADTVDKHA…SGLFQPYNVG (138 aa)) are coiled stalk domain. 4 consecutive transmembrane segments (beta stranded) span residues 307 to 317 (GRFNVTAAVGG), 321 to 332 (ESAVAIGTGFRF), 339 to 345 (KAGVAVG), and 351 to 362 (SAAYHVGVNYEW). A translocator domain region spans residues 308–362 (RFNVTAAVGGYKSESAVAIGTGFRFTENFAAKAGVAVGTSSGSSAAYHVGVNYEW).

The protein belongs to the autotransporter-2 (AT-2) (TC 1.B.40) family. Forms high molecular weight oligomers in whole cell extracts that are not disrupted by boiling in SDS buffer. Homotrimer. A fragment containing the N-terminal half of the mature protein (residues 24-210, head domain plus part of the stalk) binds human integrin beta-1 (ITGB1). It was not seen to bind immobilized purified CEACAMs 1, 3, 5, 6 or 8 nor commercially prepared type I collagen, fibronectin or matrigel.

It is found in the cell surface. The protein resides in the cell outer membrane. In terms of biological role, adheres to and induces bacterial uptake by human epithelial cells. Upon expression in engineered Y.enterocolitica confers an 11- to 15-fold increase in bacterial adherence and uptake by human epithelial cell lines; part of the uptake is mediated by integrin beta-1 (ITGB1) suggesting it may be a human receptor for NadA. A bacterial cell surface protein; antisera against this protein induce complement-mediated killing of this and other strains. This Neisseria meningitidis serogroup B (strain ATCC BAA-335 / MC58) protein is Neisseria adhesin A.